The following is a 392-amino-acid chain: Succinate--CoA ligase [ADP-forming] subunit beta (392 aa).

An ATP-grasp domain is found at 9–248; sequence KEILRGFGVT…TSEEDPLEVE (240 aa). ATP is bound by residues lysine 50, 57-59, glutamate 103, methionine 106, and glutamate 111; that span reads GRG. Mg(2+) is bound by residues asparagine 203 and aspartate 217. Substrate is bound by residues asparagine 268 and 325–327; that span reads GIV.

The protein belongs to the succinate/malate CoA ligase beta subunit family. Heterotetramer of two alpha and two beta subunits. Mg(2+) is required as a cofactor.

It carries out the reaction succinate + ATP + CoA = succinyl-CoA + ADP + phosphate. The catalysed reaction is GTP + succinate + CoA = succinyl-CoA + GDP + phosphate. It participates in carbohydrate metabolism; tricarboxylic acid cycle; succinate from succinyl-CoA (ligase route): step 1/1. Its function is as follows. Succinyl-CoA synthetase functions in the citric acid cycle (TCA), coupling the hydrolysis of succinyl-CoA to the synthesis of either ATP or GTP and thus represents the only step of substrate-level phosphorylation in the TCA. The beta subunit provides nucleotide specificity of the enzyme and binds the substrate succinate, while the binding sites for coenzyme A and phosphate are found in the alpha subunit. This is Succinate--CoA ligase [ADP-forming] subunit beta from Chloroherpeton thalassium (strain ATCC 35110 / GB-78).